A 493-amino-acid polypeptide reads, in one-letter code: Cytoplasmic tRNA 2-thiolation protein 2 (493 aa).

Residue Ser489 is modified to Phosphoserine.

It belongs to the CTU2/NCS2 family. In terms of assembly, interacts with NCS6 and URM1. May act by forming a heterodimer with NCS6.

It is found in the cytoplasm. It participates in tRNA modification; 5-methoxycarbonylmethyl-2-thiouridine-tRNA biosynthesis. In terms of biological role, plays a central role in 2-thiolation of mcm(5)S(2)U at tRNA wobble positions of tRNA(Lys), tRNA(Glu) and tRNA(Gln). May act by forming a heterodimer with NCS6 that ligates sulfur from thiocarboxylated URM1 onto the uridine of tRNAs at wobble position. Prior mcm(5) tRNA modification by the elongator complex is required for 2-thiolation. May also be involved in protein urmylation and in invasive and pseudohyphal growth. Inhibits replication of Brome mosaic virus. This Saccharomyces cerevisiae (strain ATCC 204508 / S288c) (Baker's yeast) protein is Cytoplasmic tRNA 2-thiolation protein 2.